We begin with the raw amino-acid sequence, 372 residues long: Maltose/maltodextrin import ATP-binding protein MalK (372 aa).

The 231-residue stretch at 4–234 (VTLKNVCKAY…PQNRFVAGFI (231 aa)) folds into the ABC transporter domain. Position 36 to 43 (36 to 43 (GPSGCGKS)) interacts with ATP.

The protein belongs to the ABC transporter superfamily. Maltooligosaccharide importer (TC 3.A.1.1.1) family. The complex is composed of two ATP-binding proteins (MalK), two transmembrane proteins (MalG and MalK) and a solute-binding protein (MalE).

Its subcellular location is the cell inner membrane. It catalyses the reaction D-maltose(out) + ATP + H2O = D-maltose(in) + ADP + phosphate + H(+). In terms of biological role, part of the ABC transporter complex MalEFGK involved in maltose/maltodextrin import. Responsible for energy coupling to the transport system. This chain is Maltose/maltodextrin import ATP-binding protein MalK, found in Vibrio parahaemolyticus serotype O3:K6 (strain RIMD 2210633).